Here is a 421-residue protein sequence, read N- to C-terminus: Large ribosomal subunit protein uL4 (421 aa).

Ala2 is modified (N-acetylalanine). Lys14 bears the N6-acetyllysine mark. At Arg97 the chain carries Omega-N-methylarginine. Lys106 is modified (N6-acetyllysine). A Glycyl lysine isopeptide (Lys-Gly) (interchain with G-Cter in SUMO2) cross-link involves residue Lys239. Lys259 carries the N6-acetyllysine modification. Thr266 is subject to Phosphothreonine. At Ser290 the chain carries Phosphoserine. Arg300 is modified (citrulline). Lys327 participates in a covalent cross-link: Glycyl lysine isopeptide (Lys-Gly) (interchain with G-Cter in SUMO2). Lys333 and Lys353 each carry N6-acetyllysine. The segment at 359–421 (EAKSEEKGVP…PTTEEKKPAA (63 aa)) is disordered. Lys361 is modified (N6-acetyllysine; alternate). Residue Lys361 forms a Glycyl lysine isopeptide (Lys-Gly) (interchain with G-Cter in SUMO1); alternate linkage. The residue at position 362 (Ser362) is a Phosphoserine. Positions 368–391 (PGKKPRRKKGKKTVGVKKPKKPVV) are enriched in basic residues. Over residues 401-421 (PAADKKPAEKKPTTEEKKPAA) the composition is skewed to basic and acidic residues.

It belongs to the universal ribosomal protein uL4 family. Component of the large ribosomal subunit. May bind IPO9 with low affinity. Interacts with RBM3. In terms of processing, citrullinated by PADI4.

It is found in the cytoplasm. In terms of biological role, component of the large ribosomal subunit. The ribosome is a large ribonucleoprotein complex responsible for the synthesis of proteins in the cell. This Canis lupus familiaris (Dog) protein is Large ribosomal subunit protein uL4 (RPL4).